The chain runs to 421 residues: WD repeat and SOCS box-containing protein 1 (421 aa).

WD repeat units lie at residues 124-165 (SRCV…LLLN), 168-208 (DHIE…NMVK), 212-251 (AHQN…MIRK), 254-293 (GHHH…LLME), and 309-346 (ANDR…DCPV). The SOCS box domain occupies 372–421 (DGSVYFWATPRQVPSLQHICRMSIRRVMSTQEVQKLPVPSKILAFLSYRG).

In terms of assembly, interacts with DIO2. Component of the probable ECS(WSB1) E3 ubiquitin-protein ligase complex which contains CUL5, RNF7/RBX2, Elongin BC complex and WSB1. Component of a probable ECS-like E3 ubiquitin-protein ligase complex which contains CUL5, RBX1, Elongin BC complex and WSB1. Interacts with CUL5, RNF7, ELOB and ELOC. Binds to HIPK2 through WD40 repeats.

The protein operates within protein modification; protein ubiquitination. Functionally, probable substrate-recognition component of a SCF-like ECS (Elongin-Cullin-SOCS-box protein) E3 ubiquitin ligase complex which mediates the ubiquitination and subsequent proteasomal degradation of target proteins. Recognizes type II iodothyronine deiodinase/DIO2. Confers constitutive instability to HIPK2 through proteasomal degradation. The chain is WD repeat and SOCS box-containing protein 1 (Wsb1) from Mus musculus (Mouse).